We begin with the raw amino-acid sequence, 544 residues long: Chaperonin GroEL (544 aa).

ATP is bound by residues 30–33, Lys51, 87–91, Gly415, and Asp495; these read TLGP and DGTTT.

Belongs to the chaperonin (HSP60) family. As to quaternary structure, forms a cylinder of 14 subunits composed of two heptameric rings stacked back-to-back. Interacts with the co-chaperonin GroES.

Its subcellular location is the cytoplasm. The catalysed reaction is ATP + H2O + a folded polypeptide = ADP + phosphate + an unfolded polypeptide.. Its function is as follows. Together with its co-chaperonin GroES, plays an essential role in assisting protein folding. The GroEL-GroES system forms a nano-cage that allows encapsulation of the non-native substrate proteins and provides a physical environment optimized to promote and accelerate protein folding. In Agrobacterium fabrum (strain C58 / ATCC 33970) (Agrobacterium tumefaciens (strain C58)), this protein is Chaperonin GroEL.